Reading from the N-terminus, the 168-residue chain is Zinc-finger homeodomain protein 14 (168 aa).

The ZF-HD dimerization-type; degenerate zinc finger occupies 7 to 51 (YRECMRNHAAKLGSYAIDGCREYSQPSTGDLCVACGCHRSYHRRI). A coiled-coil region spans residues 76–103 (ARLKWKTAEERNEEEEDDTEETSTEEKM). Positions 82-112 (TAEERNEEEEDDTEETSTEEKMTVQRRRKSK) are disordered. The span at 86-98 (RNEEEEDDTEETS) shows a compositional bias: acidic residues. The homeobox DNA-binding region spans 106–168 (QRRRKSKFTA…WVNNNKKFYH (63 aa)).

Homo- and heterodimer with other ZFHD proteins. Interacts with ZHD11. As to expression, mostly expressed in flowers and stems.

Its subcellular location is the nucleus. Functionally, putative transcription factor. This is Zinc-finger homeodomain protein 14 (ZHD14) from Arabidopsis thaliana (Mouse-ear cress).